Consider the following 301-residue polypeptide: ADP-ribosyl cyclase/cyclic ADP-ribose hydrolase 1 (301 aa).

Residues 1-21 lie on the Cytoplasmic side of the membrane; it reads MANCEFSPVSGDKPCCRLSRR. A helical; Signal-anchor for type II membrane protein transmembrane segment spans residues 22–43; it reads AQVCLGVCLLVLLILVVVVAVV. Residues 44-301 are Extracellular-facing; the sequence is LPRWRQQWSG…PEDSSCLSGI (258 aa). Intrachain disulfides connect Cys-68–Cys-83, Cys-100–Cys-181, and Cys-161–Cys-174. A glycan (N-linked (GlcNAc...) asparagine) is linked at Asn-101. Cys-120 is a catalytic residue. Asn-121 carries N-linked (GlcNAc...) asparagine glycosylation. Cys-202 is a catalytic residue. Asn-210 and Asn-220 each carry an N-linked (GlcNAc...) asparagine glycan. Cystine bridges form between Cys-255–Cys-276 and Cys-288–Cys-297.

It belongs to the ADP-ribosyl cyclase family. In terms of assembly, homodimer.

It is found in the cell surface. The protein localises to the membrane. The enzyme catalyses NAD(+) = cyclic ADP-beta-D-ribose + nicotinamide + H(+). The catalysed reaction is 2'-phospho-cyclic ADP-ribose + nicotinate = nicotinate-adenine dinucleotide phosphate. It carries out the reaction NAD(+) + H2O = ADP-D-ribose + nicotinamide + H(+). It catalyses the reaction nicotinate + NADP(+) = nicotinate-adenine dinucleotide phosphate + nicotinamide. ATP inhibits the cADPR hydrolyzing activity. Synthesizes cyclic ADP-ribose (cADPR), a second messenger for glucose-induced insulin secretion. Synthesizes the Ca(2+) mobilizer nicotinate-adenine dinucleotide phosphate, NAADP(+), from 2'-phospho-cADPR and nicotinic acid, as well as from NADP(+) and nicotinic acid. Also has cADPR hydrolase activity. This is ADP-ribosyl cyclase/cyclic ADP-ribose hydrolase 1 (CD38) from Macaca fascicularis (Crab-eating macaque).